The sequence spans 254 residues: tRNA 2'-phosphotransferase 1 (254 aa).

Met1 is modified (N-acetylmethionine). 2 disordered regions span residues 1–30 and 225–254; these read MNSF…DRDV and RKPL…MTQQ. Over residues 233–244 the composition is skewed to basic and acidic residues; that stretch reads NEEKEHQRDSKH.

This sequence belongs to the KptA/TPT1 family.

It catalyses the reaction 2'-phospho-[ligated tRNA] + NAD(+) = mature tRNA + ADP-alpha-D-ribose 1'',2''-cyclic phosphate + nicotinamide. In terms of biological role, catalyzes the last step of tRNA splicing, the transfer of the splice junction 2'-phosphate from ligated tRNA to NAD to produce ADP-ribose 1''-2'' cyclic phosphate. The protein is tRNA 2'-phosphotransferase 1 (TRPT1) of Bos taurus (Bovine).